A 2255-amino-acid chain; its full sequence is Non-reducing polyketide synthase nvfA (2255 aa).

The tract at residues 13–251 (ILFGPQSSDM…HHPDHTAAVE (239 aa)) is N-terminal acylcarrier protein transacylase domain (SAT). The 417-residue stretch at 365 to 781 (VRPIAVTGMA…GSNAAIVLRQ (417 aa)) folds into the Ketosynthase family 3 (KS3) domain. Residues Cys-530, His-665, and His-704 each act as for beta-ketoacyl synthase activity in the active site. Residues 887 to 1187 (LCFGGQNGNT…QASDLKSPQA (301 aa)) form a malonyl-CoA:ACP transacylase (MAT) domain region. The active-site For acyl/malonyl transferase activity is Ser-974. Residues 1229–1357 (EPMGLVQVLE…GRISLHPFDS (129 aa)) form an N-terminal hotdog fold region. A PKS/mFAS DH domain is found at 1229–1536 (EPMGLVQVLE…FTSVSIRALT (308 aa)). A product template (PT) domain region spans residues 1232-1535 (GLVQVLEKRP…TFTSVSIRAL (304 aa)). The Proton acceptor; for dehydratase activity role is filled by His-1262. The tract at residues 1385-1536 (SSSGLKGSAV…FTSVSIRALT (152 aa)) is C-terminal hotdog fold. Asp-1443 (proton donor; for dehydratase activity) is an active-site residue. In terms of domain architecture, Carrier spans 1581–1655 (TNKFPAIQAM…CLVQAIFPGA (75 aa)). Ser-1615 bears the O-(pantetheine 4'-phosphoryl)serine mark. The methyltransferase (CMeT) domain stretch occupies residues 1809–2042 (HHASEHTLLR…GYNWVNWSCN (234 aa)). Residues 2109 to 2227 (LLIHGGGHVM…ILSFYCPTDY (119 aa)) form a thioesterase (TE) domain region. The active-site For thioesterase activity is Ser-2194.

It carries out the reaction 3 malonyl-CoA + acetyl-CoA + 2 S-adenosyl-L-methionine = 3,5-dimethylorsellinate + 2 S-adenosyl-L-homocysteine + 3 CO2 + 4 CoA. Its pathway is secondary metabolite biosynthesis; terpenoid biosynthesis. Functionally, non-reducing polyketide synthase; part of the gene cluster that mediates the biosynthesis of novofumigatonin, a heavily oxygenated meroterpenoid containing a unique orthoester moiety. The first step of the pathway is the synthesis of 3,5-dimethylorsellinic acid (DMOA) by the polyketide synthase nvfA via condensation of one acetyl-CoA starter unit with 3 malonyl-CoA units and 2 methylations. DMOA is then converted to farnesyl-DMOA by the farnesyltransferase nvfB. Epoxydation by FAD-dependent monooxygenase nvfK, followed by a protonation-initiated cyclization catalyzed by the terpene cyclase nvfL leads to the production of asnavolin H. The short chain dehydrogenase nvfC then as a 3-OH dehydrogenase of asnovolin H to yield chemesin D. There are two branches to synthesize asnovolin A from chemesin D. In one branch, chemesin D undergoes Baeyer-Villiger oxidation by nvfH, methylation by nvfJ, and enoyl reduction by the nvfM D enoylreductase that reduces the double bond between C-5'and C-6', to form respectively asnovolin I, asnovolin K, and asnovolin A. In the other branch, the methylation precedes the Baeyer-Villiger oxidation and the enoyl reduction to yield asnovolin A via the asnovolin J intermediate. Asnovolin A is further converted to fumigatonoid A by the Fe(II)/2-oxoglutarate-dependent dioxygenase nvfI that catalyzes an endoperoxidation reaction. The alpha/beta hydrolase nvfD then acts as an epimerase that converts fumigatonoid A to its C-5' epimer, which then undergoes spontaneous or nvfD-catalyzed lactonization. The following step utilizes the ketoreductase nvfG to produce fumigatonoid B. The dioxygenase nvfE further converts fumigatonoid B into fumigatonoid C. Finally the Fe(II)/2-oxoglutarate-dependent dioxygenase nvfF catalyzes two rounds of oxidation to transform fumigatonoid C into the end product, novofumigatonin A. In Aspergillus novofumigatus (strain IBT 16806), this protein is Non-reducing polyketide synthase nvfA.